Here is a 269-residue protein sequence, read N- to C-terminus: MTNQKISRDVHHLAHRMSGFQESSRIVPEEAPIAMSYNGTTQAVMMATPGDLEDFAIGFSLTENIVTRIEEIEALDIVAFESGIDIQMKLAKQPEQRLSARRRFMAGPVGCGLCGIDSIEQALRPLHPLEECSTTFTTRDIAAAVASLGAAQALNAKTHATHGAGFFRPGEGLFAVREDIGRHNALDKLIGAVAREGLLAEEGIVAITSRVSVEMVQKAVMLGVPVLAAISAPTALAIRTAEAANLTLVALVRDEEFDIYTHCGRIIES.

Residue C111 is the Cysteine persulfide intermediate of the active site.

The protein belongs to the FdhD family.

The protein localises to the cytoplasm. Its function is as follows. Required for formate dehydrogenase (FDH) activity. Acts as a sulfur carrier protein that transfers sulfur from IscS to the molybdenum cofactor prior to its insertion into FDH. This Brucella abortus biovar 1 (strain 9-941) protein is Sulfur carrier protein FdhD.